The chain runs to 99 residues: UPF0125 protein PM0166 (99 aa).

The protein belongs to the UPF0125 (RnfH) family.

The protein is UPF0125 protein PM0166 of Pasteurella multocida (strain Pm70).